Here is a 215-residue protein sequence, read N- to C-terminus: Pyrrolidone-carboxylate peptidase (215 aa).

Residues Glu-78, Cys-141, and His-165 contribute to the active site.

This sequence belongs to the peptidase C15 family. In terms of assembly, homotetramer.

Its subcellular location is the cytoplasm. The enzyme catalyses Release of an N-terminal pyroglutamyl group from a polypeptide, the second amino acid generally not being Pro.. In terms of biological role, removes 5-oxoproline from various penultimate amino acid residues except L-proline. The protein is Pyrrolidone-carboxylate peptidase of Lactobacillus johnsonii (strain CNCM I-12250 / La1 / NCC 533).